Here is a 44-residue protein sequence, read N- to C-terminus: Unknown protein 1 (44 aa).

The protein is Unknown protein 1 of Lonomia obliqua (Moth).